The chain runs to 466 residues: Ribulose bisphosphate carboxylase large chain (466 aa).

Lys-5 is modified (N6,N6,N6-trimethyllysine). Substrate contacts are provided by Asn-114 and Thr-164. Lys-166 functions as the Proton acceptor in the catalytic mechanism. Lys-168 is a binding site for substrate. Residues Lys-192, Asp-194, and Glu-195 each coordinate Mg(2+). Lys-192 is subject to N6-carboxylysine. His-285 serves as the catalytic Proton acceptor. Residues Arg-286, His-318, and Ser-370 each coordinate substrate.

Belongs to the RuBisCO large chain family. Type I subfamily. Heterohexadecamer of 8 large chains and 8 small chains; disulfide-linked. The disulfide link is formed within the large subunit homodimers. It depends on Mg(2+) as a cofactor. Post-translationally, the disulfide bond which can form in the large chain dimeric partners within the hexadecamer appears to be associated with oxidative stress and protein turnover.

The protein resides in the plastid. It localises to the chloroplast. It catalyses the reaction 2 (2R)-3-phosphoglycerate + 2 H(+) = D-ribulose 1,5-bisphosphate + CO2 + H2O. The enzyme catalyses D-ribulose 1,5-bisphosphate + O2 = 2-phosphoglycolate + (2R)-3-phosphoglycerate + 2 H(+). RuBisCO catalyzes two reactions: the carboxylation of D-ribulose 1,5-bisphosphate, the primary event in carbon dioxide fixation, as well as the oxidative fragmentation of the pentose substrate in the photorespiration process. Both reactions occur simultaneously and in competition at the same active site. This chain is Ribulose bisphosphate carboxylase large chain, found in Saururus cernuus (Lizard's tail).